Consider the following 435-residue polypeptide: Methylenetetrahydrofolate--tRNA-(uracil-5-)-methyltransferase TrmFO (435 aa).

Gly-9–Gly-14 is a binding site for FAD.

It belongs to the MnmG family. TrmFO subfamily. It depends on FAD as a cofactor.

It is found in the cytoplasm. The enzyme catalyses uridine(54) in tRNA + (6R)-5,10-methylene-5,6,7,8-tetrahydrofolate + NADH + H(+) = 5-methyluridine(54) in tRNA + (6S)-5,6,7,8-tetrahydrofolate + NAD(+). The catalysed reaction is uridine(54) in tRNA + (6R)-5,10-methylene-5,6,7,8-tetrahydrofolate + NADPH + H(+) = 5-methyluridine(54) in tRNA + (6S)-5,6,7,8-tetrahydrofolate + NADP(+). Functionally, catalyzes the folate-dependent formation of 5-methyl-uridine at position 54 (M-5-U54) in all tRNAs. The polypeptide is Methylenetetrahydrofolate--tRNA-(uracil-5-)-methyltransferase TrmFO (Enterococcus faecalis (strain ATCC 700802 / V583)).